The primary structure comprises 104 residues: Phosphate metabolism protein 6 (104 aa).

Residues 76–96 (IIVIIIVLLLYSLTMVGLFYV) traverse the membrane as a helical segment.

Its subcellular location is the vacuole membrane. The chain is Phosphate metabolism protein 6 (PHM6) from Saccharomyces cerevisiae (strain ATCC 204508 / S288c) (Baker's yeast).